The chain runs to 206 residues: ATP synthase subunit b (206 aa).

Residues 14 to 34 (VMMPAAVCAAVIGLSALGFAA) form a helical membrane-spanning segment.

Belongs to the ATPase B chain family. As to quaternary structure, F-type ATPases have 2 components, F(1) - the catalytic core - and F(0) - the membrane proton channel. F(1) has five subunits: alpha(3), beta(3), gamma(1), delta(1), epsilon(1). F(0) has three main subunits: a(1), b(2) and c(10-14). The alpha and beta chains form an alternating ring which encloses part of the gamma chain. F(1) is attached to F(0) by a central stalk formed by the gamma and epsilon chains, while a peripheral stalk is formed by the delta and b chains.

It is found in the cell inner membrane. F(1)F(0) ATP synthase produces ATP from ADP in the presence of a proton or sodium gradient. F-type ATPases consist of two structural domains, F(1) containing the extramembraneous catalytic core and F(0) containing the membrane proton channel, linked together by a central stalk and a peripheral stalk. During catalysis, ATP synthesis in the catalytic domain of F(1) is coupled via a rotary mechanism of the central stalk subunits to proton translocation. In terms of biological role, component of the F(0) channel, it forms part of the peripheral stalk, linking F(1) to F(0). The sequence is that of ATP synthase subunit b from Geobacter metallireducens (strain ATCC 53774 / DSM 7210 / GS-15).